Consider the following 237-residue polypeptide: Uridylate kinase (237 aa).

Position 12–15 (12–15 (KLSG)) interacts with ATP. The segment at 20 to 25 (GDEGFG) is involved in allosteric activation by GTP. Residue Gly-54 participates in UMP binding. 2 residues coordinate ATP: Gly-55 and Arg-59. Residues Asp-74 and 135–142 (TGSPFFTT) each bind UMP. Residues Thr-162, Tyr-168, and Asp-171 each contribute to the ATP site.

The protein belongs to the UMP kinase family. In terms of assembly, homohexamer.

It is found in the cytoplasm. The catalysed reaction is UMP + ATP = UDP + ADP. It functions in the pathway pyrimidine metabolism; CTP biosynthesis via de novo pathway; UDP from UMP (UMPK route): step 1/1. With respect to regulation, allosterically activated by GTP. Inhibited by UTP. Catalyzes the reversible phosphorylation of UMP to UDP. The protein is Uridylate kinase of Haemophilus ducreyi (strain 35000HP / ATCC 700724).